The primary structure comprises 62 residues: Large ribosomal subunit protein uL15 (62 aa).

Belongs to the universal ribosomal protein uL15 family.

The polypeptide is Large ribosomal subunit protein uL15 (RPL28) (Candida albicans (Yeast)).